Consider the following 141-residue polypeptide: General odorant-binding protein 57b (141 aa).

An N-terminal signal peptide occupies residues 1-22 (MFIYRLVFIAPLILLLFSLAKA). Intrachain disulfides connect Cys39–Cys77, Cys73–Cys120, and Cys111–Cys129.

This sequence belongs to the PBP/GOBP family.

Functionally, present in the aqueous fluid surrounding olfactory sensory dendrites and are thought to aid in the capture and transport of hydrophobic odorants into and through this fluid. In Drosophila melanogaster (Fruit fly), this protein is General odorant-binding protein 57b.